A 194-amino-acid polypeptide reads, in one-letter code: RNA polymerase II subunit A C-terminal domain phosphatase SSU72 like protein 3 (194 aa).

The protein belongs to the SSU72 phosphatase family.

It localises to the nucleus. The enzyme catalyses O-phospho-L-seryl-[protein] + H2O = L-seryl-[protein] + phosphate. The catalysed reaction is O-phospho-L-threonyl-[protein] + H2O = L-threonyl-[protein] + phosphate. Its function is as follows. Protein phosphatase that catalyzes the dephosphorylation of the C-terminal domain of RNA polymerase II. Plays a role in RNA processing and termination. The chain is RNA polymerase II subunit A C-terminal domain phosphatase SSU72 like protein 3 from Homo sapiens (Human).